A 577-amino-acid chain; its full sequence is Sensory neuron membrane protein 2 (577 aa).

The Cytoplasmic segment spans residues 1 to 6 (MVQCTL). The helical transmembrane segment at 7-27 (IWAGIGAMMAVSGALLGWVVF) threads the bilayer. At 28–519 (PRAVHEKVIE…LMKVLSLLDV (492 aa)) the chain is on the extracellular side. 4 N-linked (GlcNAc...) asparagine glycosylation sites follow: N66, N161, N271, and N307. 3 disulfides stabilise this stretch: C316/C384, C345/C411, and C386/C400. The chain crosses the membrane as a helical span at residues 520 to 540 (VQWVLIGVGLLLAVLMPTVYF). Residues 541 to 577 (VKRCRGEGSRTVSPAVTATTSAASLSTVAGVTGDRSK) are Cytoplasmic-facing.

The protein belongs to the CD36 family.

It localises to the cell membrane. In terms of biological role, plays an olfactory role that is not restricted to pheromone sensitivity. The protein is Sensory neuron membrane protein 2 of Anopheles gambiae (African malaria mosquito).